A 258-amino-acid polypeptide reads, in one-letter code: NAD kinase (258 aa).

The Proton acceptor role is filled by Asp-45. NAD(+) is bound by residues 45 to 46, 117 to 118, Asp-147, Ala-155, 158 to 163, and Ala-182; these read DG, NE, and TAYNYS.

It belongs to the NAD kinase family. It depends on a divalent metal cation as a cofactor.

The protein localises to the cytoplasm. It carries out the reaction NAD(+) + ATP = ADP + NADP(+) + H(+). Involved in the regulation of the intracellular balance of NAD and NADP, and is a key enzyme in the biosynthesis of NADP. Catalyzes specifically the phosphorylation on 2'-hydroxyl of the adenosine moiety of NAD to yield NADP. This is NAD kinase from Xanthomonas oryzae pv. oryzae (strain MAFF 311018).